A 150-amino-acid polypeptide reads, in one-letter code: 3-dehydroquinate dehydratase (150 aa).

The Proton acceptor role is filled by Y26. Residues N77, H83, and D90 each coordinate substrate. H103 acts as the Proton donor in catalysis. Residues 104 to 105 (LS) and R114 each bind substrate.

It belongs to the type-II 3-dehydroquinase family. As to quaternary structure, homododecamer.

It carries out the reaction 3-dehydroquinate = 3-dehydroshikimate + H2O. It functions in the pathway metabolic intermediate biosynthesis; chorismate biosynthesis; chorismate from D-erythrose 4-phosphate and phosphoenolpyruvate: step 3/7. Catalyzes a trans-dehydration via an enolate intermediate. The chain is 3-dehydroquinate dehydratase from Mannheimia succiniciproducens (strain KCTC 0769BP / MBEL55E).